The sequence spans 458 residues: MTEDTIAALSTPPGEGGIAVIRVSGPDSQNKVKQIFRSSRTDGNFNNKKMYHGQIVSPETNRILDEVLVVFMNKPYTYTCEDVVEIHCHGGMVPVKEILQLLFSYGIRPAEPGEFTKRAFLNGRLDLTQAEGVMDLITSKTNNLKNVAINQLQGNLKQKIDRLRDDLVSVMANLEARIDFPDEDIDVEDYHELKHRIDNAKVDINNLIASYDKGKIIREGIKTVIVGRPNVGKSSLLNLLLGEERAIVTEIPGTTRDVLEEVINLKGIPLRIIDTAGIRESEDKVEQIGVKRTRDSMEQADIILVVIDSSQELSQEDKQILTMAQDKTSLLVLNKTDLHEKLDIDEIDKLVSQIPKVRISALKEEGLDKLEEHISELVFGGQVMQTEELVITKARHFHSLDKVKEALSSAEENIKAEMSEDLIAIDIKEAYDYLGEITGETASEELVDRIFNDFCIGK.

3 residues coordinate (6S)-5-formyl-5,6,7,8-tetrahydrofolate: Arg22, Glu85, and Arg124. The region spanning 220–379 (GIKTVIVGRP…LEEHISELVF (160 aa)) is the TrmE-type G domain. Position 230 (Asn230) interacts with K(+). GTP is bound by residues 230 to 235 (NVGKSS), 249 to 255 (TEIPGTT), and 274 to 277 (DTAG). Position 234 (Ser234) interacts with Mg(2+). Residues Thr249, Ile251, and Thr254 each coordinate K(+). Thr255 lines the Mg(2+) pocket. Lys458 is a (6S)-5-formyl-5,6,7,8-tetrahydrofolate binding site.

The protein belongs to the TRAFAC class TrmE-Era-EngA-EngB-Septin-like GTPase superfamily. TrmE GTPase family. As to quaternary structure, homodimer. Heterotetramer of two MnmE and two MnmG subunits. K(+) serves as cofactor.

The protein resides in the cytoplasm. Its function is as follows. Exhibits a very high intrinsic GTPase hydrolysis rate. Involved in the addition of a carboxymethylaminomethyl (cmnm) group at the wobble position (U34) of certain tRNAs, forming tRNA-cmnm(5)s(2)U34. The chain is tRNA modification GTPase MnmE from Natranaerobius thermophilus (strain ATCC BAA-1301 / DSM 18059 / JW/NM-WN-LF).